The chain runs to 416 residues: Prostacyclin receptor (416 aa).

The Extracellular portion of the chain corresponds to 1-45 (MVASGGRPDGPPSITPESPLIVGGREWQGMAGSCWNITYVQDSVG). Disulfide bonds link cysteine 34–cysteine 194 and cysteine 121–cysteine 199. N-linked (GlcNAc...) asparagine glycosylation is present at asparagine 36. Residues 46–67 (PATSTLMFVAGVVGNGLALGIL) traverse the membrane as a helical segment. At 68–80 (GARRRSHPSAFAV) the chain is on the cytoplasmic side. A helical membrane pass occupies residues 81–105 (LVTGLAVTDLLGTCFLSPAVFVAYA). Residues 106–123 (RNSSLLGLAHGGTMLCDT) are Extracellular-facing. The chain crosses the membrane as a helical span at residues 124–144 (FAFAMTFFGLASTLILFAMAV). At 145–163 (ERCLALSHPYLYAQLDGPR) the chain is on the cytoplasmic side. Residues 164 to 187 (CARLALPAIYAFCCLFCSLPLLGL) form a helical membrane-spanning segment. The Extracellular segment spans residues 188 to 215 (GEHQQYCPGSWCFIRMRSPQPGGCAFSL). Residues 216-237 (AYASLMALLVTSIFFCNGSVTL) traverse the membrane as a helical segment. Over 238 to 264 (SLCHMYRQQRRHHGSFVPTSRAREDEV) the chain is Cytoplasmic. A helical transmembrane segment spans residues 265–289 (YHLILLALMTGIMAVCSLPLTIRGF). Over 290–302 (TQAIAPDSREMGD) the chain is Extracellular. The chain crosses the membrane as a helical span at residues 303–323 (LHAFRFNAFNPILDPWVFILF). Residues 324–416 (RKAVFQRLKF…TEAVVACSLC (93 aa)) are Cytoplasmic-facing. Phosphoserine is present on serine 366. Cysteine methyl ester is present on cysteine 413. Residue cysteine 413 is the site of S-farnesyl cysteine attachment. The propeptide at 414 to 416 (SLC) is removed in mature form.

The protein belongs to the G-protein coupled receptor 1 family. Interacts (non-isoprenylated C-terminus) with PDZK1. Post-translationally, isoprenylation does not influence ligand binding but is required for efficient coupling to the effectors adenylyl cyclase and phospholipase C.

The protein localises to the cell membrane. Functionally, receptor for prostacyclin (prostaglandin I2 or PGI2). The activity of this receptor is mediated by G(s) proteins which activate adenylate cyclase. This Rattus norvegicus (Rat) protein is Prostacyclin receptor (Ptgir).